Consider the following 469-residue polypeptide: Putative diacyglycerol O-acyltransferase MT0231 (469 aa).

The active-site Proton acceptor is the His139.

Belongs to the long-chain O-acyltransferase family.

The enzyme catalyses an acyl-CoA + a 1,2-diacyl-sn-glycerol = a triacyl-sn-glycerol + CoA. Its pathway is glycerolipid metabolism; triacylglycerol biosynthesis. This Mycobacterium tuberculosis (strain CDC 1551 / Oshkosh) protein is Putative diacyglycerol O-acyltransferase MT0231.